We begin with the raw amino-acid sequence, 441 residues long: Chitinase-like protein Idgf3 (441 aa).

A signal peptide spans 1 to 23 (MTGSLWLSLALSLAVLAQFKVSA). Residues 25–441 (PNLVCFYDSQ…MLRAIKYRLL (417 aa)) form the GH18 domain. A disulfide bridge links C29 with C56. N-linked (GlcNAc...) asparagine glycosylation occurs at N221. Residues 309-331 (SGDSGMPVVPSTQGPAPAGPQSK) form a disordered region. C342 and C425 are oxidised to a cystine.

The protein belongs to the glycosyl hydrolase 18 family. IDGF subfamily. Post-translationally, glycosylated.

The protein localises to the secreted. Cooperates with insulin-like peptides to stimulate the proliferation, polarization and motility of imaginal disk cells. May act by stabilizing the binding of insulin-like peptides to its receptor through a simultaneous interaction with both molecules to form a multiprotein signaling complex. The polypeptide is Chitinase-like protein Idgf3 (Idgf3) (Drosophila yakuba (Fruit fly)).